We begin with the raw amino-acid sequence, 62 residues long: Small ribosomal subunit protein bS21 (62 aa).

Residues 38–62 form a disordered region; it reads YEKPSERRKRKMNAAVRKNRRTRHG.

The protein belongs to the bacterial ribosomal protein bS21 family.

The sequence is that of Small ribosomal subunit protein bS21 from Gemmatimonas aurantiaca (strain DSM 14586 / JCM 11422 / NBRC 100505 / T-27).